An 880-amino-acid chain; its full sequence is Interference hedgehog (880 aa).

An N-terminal signal peptide occupies residues 1 to 20 (MPSIVSSLLLVVLLTSPLGA). Topologically, residues 21–703 (IPVLYPSPPP…SHNETFSMSP (683 aa)) are extracellular. 4 consecutive Ig-like C2-type domains span residues 37-142 (PGVR…TARL), 154-235 (PVTS…STSS), 251-339 (PYLL…FIQV), and 345-432 (PQIV…LQVT). Intrachain disulfides connect Cys-60–Cys-126, Cys-172–Cys-219, Cys-275–Cys-323, and Cys-366–Cys-414. N-linked (GlcNAc...) asparagine glycans are attached at residues Asn-79, Asn-102, and Asn-208. The disordered stretch occupies residues 435-468 (PIHSESTQQSDHNHSKANRGRRPAQMIPPSAPNV). Residues Asn-447 and Asn-467 are each glycosylated (N-linked (GlcNAc...) asparagine). Fibronectin type-III domains follow at residues 462–570 (PPSA…LQPG) and 578–673 (VPEM…TQRP). Arg-498, Lys-504, Lys-506, and Arg-544 together coordinate heparin. An N-linked (GlcNAc...) asparagine glycan is attached at Asn-560. The tract at residues 665–699 (LKQGRTQRPMVSTTEEATLQTGVRDTTTPSHNETF) is disordered. A compositionally biased stretch (polar residues) spans 668–699 (GRTQRPMVSTTEEATLQTGVRDTTTPSHNETF). A glycan (N-linked (GlcNAc...) asparagine) is linked at Asn-696. The chain crosses the membrane as a helical span at residues 704–724 (IVTGTIGGGAVLILFVVTTCL). Residues 725 to 880 (CMWRRRNSRA…SSGSLNSVGV (156 aa)) lie on the Cytoplasmic side of the membrane. A disordered region spans residues 797-880 (YFQRQPTYDY…SSGSLNSVGV (84 aa)). Composition is skewed to low complexity over residues 827–839 (RAGSSNGNNNNLN) and 864–880 (SSRSENLSSGSLNSVGV).

It belongs to the immunoglobulin superfamily. IHOG family. In terms of assembly, homodimer. Heterotetramer; 2 iHog chains bind 2 hh chains when facilitated by heparin, heparin is required to promote high-affinity interactions between hh and iHog.

The protein localises to the membrane. Mediates response to the active Hedgehog (Hh) protein signal in embryos, functioning upstream or at the level of patched (ptc). In Drosophila ananassae (Fruit fly), this protein is Interference hedgehog.